Here is a 79-residue protein sequence, read N- to C-terminus: Phosphoribosylformylglycinamidine synthase subunit PurS (79 aa).

This sequence belongs to the PurS family. In terms of assembly, homodimer. Part of the FGAM synthase complex composed of 1 PurL, 1 PurQ and 2 PurS subunits.

The protein localises to the cytoplasm. The catalysed reaction is N(2)-formyl-N(1)-(5-phospho-beta-D-ribosyl)glycinamide + L-glutamine + ATP + H2O = 2-formamido-N(1)-(5-O-phospho-beta-D-ribosyl)acetamidine + L-glutamate + ADP + phosphate + H(+). It functions in the pathway purine metabolism; IMP biosynthesis via de novo pathway; 5-amino-1-(5-phospho-D-ribosyl)imidazole from N(2)-formyl-N(1)-(5-phospho-D-ribosyl)glycinamide: step 1/2. Its function is as follows. Part of the phosphoribosylformylglycinamidine synthase complex involved in the purines biosynthetic pathway. Catalyzes the ATP-dependent conversion of formylglycinamide ribonucleotide (FGAR) and glutamine to yield formylglycinamidine ribonucleotide (FGAM) and glutamate. The FGAM synthase complex is composed of three subunits. PurQ produces an ammonia molecule by converting glutamine to glutamate. PurL transfers the ammonia molecule to FGAR to form FGAM in an ATP-dependent manner. PurS interacts with PurQ and PurL and is thought to assist in the transfer of the ammonia molecule from PurQ to PurL. In Mycobacterium leprae (strain TN), this protein is Phosphoribosylformylglycinamidine synthase subunit PurS.